Consider the following 110-residue polypeptide: Large ribosomal subunit protein uL22 (110 aa).

It belongs to the universal ribosomal protein uL22 family. In terms of assembly, part of the 50S ribosomal subunit.

In terms of biological role, this protein binds specifically to 23S rRNA; its binding is stimulated by other ribosomal proteins, e.g. L4, L17, and L20. It is important during the early stages of 50S assembly. It makes multiple contacts with different domains of the 23S rRNA in the assembled 50S subunit and ribosome. Its function is as follows. The globular domain of the protein is located near the polypeptide exit tunnel on the outside of the subunit, while an extended beta-hairpin is found that lines the wall of the exit tunnel in the center of the 70S ribosome. The sequence is that of Large ribosomal subunit protein uL22 from Teredinibacter turnerae (strain ATCC 39867 / T7901).